Here is a 61-residue protein sequence, read N- to C-terminus: Protein CopA/IncA (61 aa).

Controls the copy number in gene replication. In Escherichia coli, this protein is Protein CopA/IncA (copA).